We begin with the raw amino-acid sequence, 123 residues long: Succinate dehydrogenase assembly factor 3, mitochondrial (123 aa).

Residues 1–31 (MANPAHISAVRTLYKKILVLHRFLPIDLRAL) constitute a mitochondrion transit peptide.

Belongs to the complex I LYR family. SDHAF3 subfamily. In terms of assembly, interacts with sdhb within an sdha-sdhb subcomplex.

It is found in the mitochondrion matrix. In terms of biological role, plays an essential role in the assembly of succinate dehydrogenase (SDH), an enzyme complex (also referred to as respiratory complex II) that is a component of both the tricarboxylic acid (TCA) cycle and the mitochondrial electron transport chain, and which couples the oxidation of succinate to fumarate with the reduction of ubiquinone (coenzyme Q) to ubiquinol. Promotes maturation of the iron-sulfur protein subunit sdhb of the SDH catalytic dimer, protecting it from the deleterious effects of oxidants. May act together with SDHAF1. This Danio rerio (Zebrafish) protein is Succinate dehydrogenase assembly factor 3, mitochondrial.